We begin with the raw amino-acid sequence, 84 residues long: Alpha-like toxin BmK M1 (84 aa).

Residues 1 to 19 (MNYLVMISFALLLMTGVES) form the signal peptide. The LCN-type CS-alpha/beta domain maps to 21 to 83 (RDAYIAKPHN…VPIRVPGKCH (63 aa)). 4 disulfides stabilise this stretch: C31/C82, C35/C55, C41/C65, and C45/C67. A propeptide (removed by a carboxypeptidase) is located at residue R84.

It belongs to the long (4 C-C) scorpion toxin superfamily. Sodium channel inhibitor family. Alpha subfamily. As to expression, expressed by the venom gland.

Its subcellular location is the secreted. Alpha toxins bind voltage-independently at site-3 of sodium channels (Nav) and inhibit the inactivation of the activated channels thereby blocking neuronal transmission. This toxin is active against both mammals and insects, and is classified as an alpha-like toxin. It is active on Nav1.2/SCN2A (EC(50)=139-252 nM), Nav1.3/SCN3A (EC(50)=565 nM), Nav1.4/SCN4A and Nav1.5/SCN5A (EC(50)=195-500 nM), Nav1.6/SCN8A (EC(50)=214 nM), and drosophila DmNav1 (EC(50)=30 nM). In mNav1.6/SCN8A, the toxin induces a large increase in both transient and persistent currents, which correlates with a prominent reduction in the fast component of inactivating current. In rNav1.2/SCN2A and rNav1.3/SCN3A, toxin-increased currents is much smaller. Moreover, the toxin only accelerates the slow inactivation development and delay recovery of mNav1.6/SCN8A through binding to the channel in the open state. Is 6-fold more toxic than BmK-M2. In vivo, intrahippocampal injection into rat induces epileptiform responses. In addition, intraplantar injection into rat induces spontaneous nociception and hyperalgesia. This chain is Alpha-like toxin BmK M1, found in Olivierus martensii (Manchurian scorpion).